We begin with the raw amino-acid sequence, 450 residues long: Na(+)/H(+) antiporter NhaA 2 (450 aa).

Transmembrane regions (helical) follow at residues 43-63 (VGGA…NSPW), 86-106 (LTLG…VVGL), 124-144 (ALPM…FVAV), 155-175 (GWAI…AVIS), 185-205 (FLLT…AVFY), 208-228 (EINL…ALCV), 234-254 (SWWL…ESGV), 258-278 (VAGV…AGGP), 299-319 (VAVP…VSGL), 326-346 (PITL…IFLT), 364-384 (WIDV…SLLI), and 398-418 (FVKV…AVLL).

Belongs to the NhaA Na(+)/H(+) (TC 2.A.33) antiporter family.

The protein localises to the cell membrane. It carries out the reaction Na(+)(in) + 2 H(+)(out) = Na(+)(out) + 2 H(+)(in). Its function is as follows. Na(+)/H(+) antiporter that extrudes sodium in exchange for external protons. This Mycobacterium sp. (strain KMS) protein is Na(+)/H(+) antiporter NhaA 2.